We begin with the raw amino-acid sequence, 252 residues long: Hydroxyacylglutathione hydrolase (252 aa).

Residues His-52, His-54, Asp-56, His-57, His-107, Asp-128, and His-166 each coordinate Zn(2+).

The protein belongs to the metallo-beta-lactamase superfamily. Glyoxalase II family. In terms of assembly, monomer. Requires Zn(2+) as cofactor.

The catalysed reaction is an S-(2-hydroxyacyl)glutathione + H2O = a 2-hydroxy carboxylate + glutathione + H(+). Its pathway is secondary metabolite metabolism; methylglyoxal degradation; (R)-lactate from methylglyoxal: step 2/2. Thiolesterase that catalyzes the hydrolysis of S-D-lactoyl-glutathione to form glutathione and D-lactic acid. This is Hydroxyacylglutathione hydrolase from Neisseria meningitidis serogroup C (strain 053442).